We begin with the raw amino-acid sequence, 148 residues long: UPF0260 protein KPK_1978 (148 aa).

Belongs to the UPF0260 family.

The polypeptide is UPF0260 protein KPK_1978 (Klebsiella pneumoniae (strain 342)).